The sequence spans 221 residues: Woronin body major protein (221 aa).

The short motif at 219–221 (SRL) is the Microbody targeting signal element.

The protein belongs to the eIF-5A family. Hex1 subfamily. Forms oligomers. Self-assembles into hexagonal rods.

It is found in the cell septum. Functionally, major component of Woronin bodies, fungal-specific organelles that occlude septal pores in order to separate intact from damaged compartments. Hex1 binds directly or indirectly to the Woronin body tether that in turn is anchored at the rim of the septal pore. In Emericella nidulans (strain FGSC A4 / ATCC 38163 / CBS 112.46 / NRRL 194 / M139) (Aspergillus nidulans), this protein is Woronin body major protein.